A 274-amino-acid polypeptide reads, in one-letter code: Bis(5'-nucleosyl)-tetraphosphatase, symmetrical (274 aa).

Belongs to the Ap4A hydrolase family.

It catalyses the reaction P(1),P(4)-bis(5'-adenosyl) tetraphosphate + H2O = 2 ADP + 2 H(+). Functionally, hydrolyzes diadenosine 5',5'''-P1,P4-tetraphosphate to yield ADP. This Shewanella baltica (strain OS185) protein is Bis(5'-nucleosyl)-tetraphosphatase, symmetrical.